An 80-amino-acid polypeptide reads, in one-letter code: MKLTCMMIVAVMFLTASIFITADNSRNGIENLPRMRRHEMKKPKASKLNKRVCIADDMPCGFGLFGGPLCCSGWCLFVCL.

An N-terminal signal peptide occupies residues 1–22 (MKLTCMMIVAVMFLTASIFITA). The propeptide occupies 23 to 51 (DNSRNGIENLPRMRRHEMKKPKASKLNKR). Cystine bridges form between C53/C71, C60/C75, and C70/C79.

This sequence belongs to the conotoxin O1 superfamily. As to expression, expressed by the venom duct.

It is found in the secreted. Its function is as follows. Omega-conotoxins act at presynaptic membranes, they bind and block voltage-gated calcium channels (Cav). This chain is Omega-conotoxin-like 2/7, found in Conus imperialis (Imperial cone).